The following is a 188-amino-acid chain: dCTP deaminase, dUMP-forming (188 aa).

Residues 101–106 (KSSLGR), D119, 127–129 (TLE), Q148, Y162, and Q174 each bind dCTP. The Proton donor/acceptor role is filled by E129.

It belongs to the dCTP deaminase family. In terms of assembly, homotrimer.

The catalysed reaction is dCTP + 2 H2O = dUMP + NH4(+) + diphosphate. The protein operates within pyrimidine metabolism; dUMP biosynthesis; dUMP from dCTP: step 1/1. Its function is as follows. Bifunctional enzyme that catalyzes both the deamination of dCTP to dUTP and the hydrolysis of dUTP to dUMP without releasing the toxic dUTP intermediate. The chain is dCTP deaminase, dUMP-forming from Corynebacterium jeikeium (strain K411).